A 210-amino-acid polypeptide reads, in one-letter code: Regulatory protein RecX (210 aa).

Positions 28–47 are disordered; that stretch reads SRRQEEGAASSLFDREAEEK.

It belongs to the RecX family.

It is found in the cytoplasm. In terms of biological role, modulates RecA activity. This chain is Regulatory protein RecX, found in Corynebacterium efficiens (strain DSM 44549 / YS-314 / AJ 12310 / JCM 11189 / NBRC 100395).